The following is a 25-amino-acid chain: Endoglucanase 1 (25 aa).

The tract at residues 1–25 (YDASLKPNLQIPQKNIPNNDAVNIK) is disordered. Polar residues predominate over residues 10 to 25 (QIPQKNIPNNDAVNIK).

It carries out the reaction Endohydrolysis of (1-&gt;4)-beta-D-glucosidic linkages in cellulose, lichenin and cereal beta-D-glucans.. This enzyme hydrolyzes cellotetraose, cellopentaose, and cellohexaose to cellobiose and cellotriose but does not hydrolyze cellobiose or cellotriose. In Ruminiclostridium josui (Clostridium josui), this protein is Endoglucanase 1.